The primary structure comprises 354 residues: MGKLVALTVLGASLALLGERLLNFRERVSTSREIKPTEPQNCHLIEGLENGSEDIDILPSGLAFISTGLKYPGMPSFAPDKPGRIFLMDLNEPYPKAQALEISDGFDQDSLNPHGISTFIDKDNTVYLYAVNHPHMDSTVEIFKFEEQPRSLVHLKTIKHELFESVNDIVVLGPEQFYATRDHYFTSHFLVLLEMILDPHWTSVLFYSPKEVKVVAQGFSSANGITVSLDQKYVYVADVTAKNIHIMKKHNNWDLTPVKVIQLGTLVDNLTVDPATGDILAGCHPNPMKLLIYNPEDPPGSEVLRIQDPLSDNPRVSTLYSNNGSVLQGSTVASVYHKKMLIGTIFHKALYCEL.

C42 and C352 are joined by a disulfide. The N-linked (GlcNAc...) asparagine glycan is linked to N50. Ca(2+) is bound by residues E53 and D54. H114 functions as the Proton acceptor in the catalytic mechanism. Residue I116 participates in Ca(2+) binding. S165 is subject to Phosphoserine. Ca(2+) is bound by residues N167, D168, N223, D268, and N269. N269 and N323 each carry an N-linked (GlcNAc...) asparagine glycan.

This sequence belongs to the paraoxonase family. Homodimer. Ca(2+) is required as a cofactor. Post-translationally, glycosylated. In terms of processing, the signal sequence is not cleaved.

It is found in the secreted. Its subcellular location is the extracellular space. It catalyses the reaction a phenyl acetate + H2O = a phenol + acetate + H(+). The catalysed reaction is An aryl dialkyl phosphate + H2O = dialkyl phosphate + an aryl alcohol.. The enzyme catalyses an N-acyl-L-homoserine lactone + H2O = an N-acyl-L-homoserine + H(+). Has low activity towards the organophosphate paraxon and aromatic carboxylic acid esters. Rapidly hydrolyzes lactones such as statin prodrugs (e.g. lovastatin). Hydrolyzes aromatic lactones and 5- or 6-member ring lactones with aliphatic substituents but not simple lactones or those with polar substituents. The protein is Serum paraoxonase/lactonase 3 (Pon3) of Rattus norvegicus (Rat).